The following is a 417-amino-acid chain: Queuine tRNA-ribosyltransferase accessory subunit 2 (417 aa).

Residues C324, C326, C329, and H355 each coordinate Zn(2+).

This sequence belongs to the queuine tRNA-ribosyltransferase family. QTRT2 subfamily. In terms of assembly, heterodimer of a catalytic subunit and an accessory subunit. It depends on Zn(2+) as a cofactor.

It localises to the cytoplasm. In terms of biological role, non-catalytic subunit of the queuine tRNA-ribosyltransferase (TGT) that catalyzes the base-exchange of a guanine (G) residue with queuine (Q) at position 34 (anticodon wobble position) in tRNAs with GU(N) anticodons (tRNA-Asp, -Asn, -His and -Tyr), resulting in the hypermodified nucleoside queuosine (7-(((4,5-cis-dihydroxy-2-cyclopenten-1-yl)amino)methyl)-7-deazaguanosine). This is Queuine tRNA-ribosyltransferase accessory subunit 2 from Drosophila virilis (Fruit fly).